We begin with the raw amino-acid sequence, 356 residues long: Nicotinate-nucleotide--dimethylbenzimidazole phosphoribosyltransferase (356 aa).

The Proton acceptor role is filled by E317.

Belongs to the CobT family. As to quaternary structure, homodimer.

The enzyme catalyses 5,6-dimethylbenzimidazole + nicotinate beta-D-ribonucleotide = alpha-ribazole 5'-phosphate + nicotinate + H(+). It functions in the pathway nucleoside biosynthesis; alpha-ribazole biosynthesis; alpha-ribazole from 5,6-dimethylbenzimidazole: step 1/2. Catalyzes the synthesis of alpha-ribazole-5'-phosphate from nicotinate mononucleotide (NAMN) and 5,6-dimethylbenzimidazole (DMB). This is Nicotinate-nucleotide--dimethylbenzimidazole phosphoribosyltransferase from Salmonella paratyphi A (strain AKU_12601).